The following is a 195-amino-acid chain: 3-isopropylmalate dehydratase small subunit (195 aa).

This sequence belongs to the LeuD family. LeuD type 1 subfamily. As to quaternary structure, heterodimer of LeuC and LeuD.

The catalysed reaction is (2R,3S)-3-isopropylmalate = (2S)-2-isopropylmalate. It functions in the pathway amino-acid biosynthesis; L-leucine biosynthesis; L-leucine from 3-methyl-2-oxobutanoate: step 2/4. In terms of biological role, catalyzes the isomerization between 2-isopropylmalate and 3-isopropylmalate, via the formation of 2-isopropylmaleate. The protein is 3-isopropylmalate dehydratase small subunit of Rubrobacter xylanophilus (strain DSM 9941 / JCM 11954 / NBRC 16129 / PRD-1).